Consider the following 229-residue polypeptide: Cytidylate kinase (229 aa).

15-23 (GPAASGKST) lines the ATP pocket.

This sequence belongs to the cytidylate kinase family. Type 1 subfamily.

Its subcellular location is the cytoplasm. The enzyme catalyses CMP + ATP = CDP + ADP. It carries out the reaction dCMP + ATP = dCDP + ADP. In Herpetosiphon aurantiacus (strain ATCC 23779 / DSM 785 / 114-95), this protein is Cytidylate kinase.